The following is a 344-amino-acid chain: Glycerol-3-phosphate dehydrogenase [NAD(P)+] (344 aa).

NADPH is bound by residues W11, R31, R32, and K105. Residues K105, G133, and S135 each contribute to the sn-glycerol 3-phosphate site. Residue A137 coordinates NADPH. Sn-glycerol 3-phosphate contacts are provided by K188, D241, S251, R252, and N253. Catalysis depends on K188, which acts as the Proton acceptor. NADPH is bound at residue R252. NADPH is bound at residue E278.

It belongs to the NAD-dependent glycerol-3-phosphate dehydrogenase family.

Its subcellular location is the cytoplasm. It carries out the reaction sn-glycerol 3-phosphate + NAD(+) = dihydroxyacetone phosphate + NADH + H(+). The catalysed reaction is sn-glycerol 3-phosphate + NADP(+) = dihydroxyacetone phosphate + NADPH + H(+). The protein operates within membrane lipid metabolism; glycerophospholipid metabolism. Its function is as follows. Catalyzes the reduction of the glycolytic intermediate dihydroxyacetone phosphate (DHAP) to sn-glycerol 3-phosphate (G3P), the key precursor for phospholipid synthesis. In Acidithiobacillus ferrooxidans (strain ATCC 23270 / DSM 14882 / CIP 104768 / NCIMB 8455) (Ferrobacillus ferrooxidans (strain ATCC 23270)), this protein is Glycerol-3-phosphate dehydrogenase [NAD(P)+].